We begin with the raw amino-acid sequence, 343 residues long: L-threonine 3-dehydrogenase (343 aa).

Zn(2+) is bound at residue C38. Catalysis depends on charge relay system residues T40 and H43. H63, E64, C93, C96, C99, and C107 together coordinate Zn(2+). Residues I175, D195, R200, 262–264 (LGI), and 286–287 (IY) each bind NAD(+).

It belongs to the zinc-containing alcohol dehydrogenase family. In terms of assembly, homotetramer. Zn(2+) is required as a cofactor.

It is found in the cytoplasm. It catalyses the reaction L-threonine + NAD(+) = (2S)-2-amino-3-oxobutanoate + NADH + H(+). It functions in the pathway amino-acid degradation; L-threonine degradation via oxydo-reductase pathway; glycine from L-threonine: step 1/2. In terms of biological role, catalyzes the NAD(+)-dependent oxidation of L-threonine to 2-amino-3-ketobutyrate. The chain is L-threonine 3-dehydrogenase from Paraburkholderia phytofirmans (strain DSM 17436 / LMG 22146 / PsJN) (Burkholderia phytofirmans).